A 272-amino-acid polypeptide reads, in one-letter code: Acidic leucine-rich nuclear phosphoprotein 32-related protein 2 (272 aa).

LRR repeat units lie at residues 57-78, 79-100, and 106-127; these read SLEE…PRLP, ALRR…AAVA, and TLRH…APLA. Positions 139–184 constitute an LRRCT domain; sequence CPVTKAKGYRDKVFALIPSLKFLDGMDAEGNDCLDSDDEEDEEEDE. The segment at 163–272 is disordered; it reads GMDAEGNDCL…DSEDDANGDN (110 aa). Positions 164 to 241 are enriched in acidic residues; sequence MDAEGNDCLD…DEAGADEEDE (78 aa). Over residues 248-257 the composition is skewed to polar residues; the sequence is SKGSSGSAQP.

This sequence belongs to the ANP32 family.

In Oryza sativa subsp. japonica (Rice), this protein is Acidic leucine-rich nuclear phosphoprotein 32-related protein 2.